Reading from the N-terminus, the 346-residue chain is MSQIGINDGASQQPAGTTLGGVAARLGKVAVLMGGASAEREVSLMSGQGVLQALISQGVDAHAFDPAERDLAELKVEGFSHCFIALHGRFGEDGTVQGALELLGIPYTGSGVMASSIAIDKVMTKRIWRSEGLPTPEWRQVDSAAATSEAFAALGSPMIVKPDREGSTIGLTKVTQIEQCGAAYALAARHDAMVLCEQFVKGDEVTIPLLGSGAGAHALPVIRIVAPDGNYDYQNKYFTDTTQYLVPANLPAGEEAHIQQLALKAYQVLGCRGWARVDVMIDARTRAPFLLEINTSPGMTPHSLVPMAAKAAGVSYPALCLEVLRHATLDYAAAGGDAQQPSTEPA.

Residues 125 to 325 (KRIWRSEGLP…YPALCLEVLR (201 aa)) form the ATP-grasp domain. 151–206 (FAALGSPMIVKPDREGSTIGLTKVTQIEQCGAAYALAARHDAMVLCEQFVKGDEVT) serves as a coordination point for ATP. 3 residues coordinate Mg(2+): D278, E292, and N294.

This sequence belongs to the D-alanine--D-alanine ligase family. Mg(2+) serves as cofactor. Mn(2+) is required as a cofactor.

The protein resides in the cytoplasm. It carries out the reaction 2 D-alanine + ATP = D-alanyl-D-alanine + ADP + phosphate + H(+). It participates in cell wall biogenesis; peptidoglycan biosynthesis. Its function is as follows. Cell wall formation. The chain is D-alanine--D-alanine ligase from Albidiferax ferrireducens (strain ATCC BAA-621 / DSM 15236 / T118) (Rhodoferax ferrireducens).